We begin with the raw amino-acid sequence, 417 residues long: NADH-quinone oxidoreductase subunit D (417 aa).

The protein belongs to the complex I 49 kDa subunit family. In terms of assembly, NDH-1 is composed of 14 different subunits. Subunits NuoB, C, D, E, F, and G constitute the peripheral sector of the complex.

Its subcellular location is the cell inner membrane. The catalysed reaction is a quinone + NADH + 5 H(+)(in) = a quinol + NAD(+) + 4 H(+)(out). Its function is as follows. NDH-1 shuttles electrons from NADH, via FMN and iron-sulfur (Fe-S) centers, to quinones in the respiratory chain. The immediate electron acceptor for the enzyme in this species is believed to be ubiquinone. Couples the redox reaction to proton translocation (for every two electrons transferred, four hydrogen ions are translocated across the cytoplasmic membrane), and thus conserves the redox energy in a proton gradient. In Nitrosomonas eutropha (strain DSM 101675 / C91 / Nm57), this protein is NADH-quinone oxidoreductase subunit D.